Reading from the N-terminus, the 784-residue chain is Cell wall protein Lmo0130 (784 aa).

The first 34 residues, 1 to 34 (MKVNKFFKKTTHVLLVAGLTIGLTAPFTGTTAQA), serve as a signal peptide directing secretion. The segment at 690–761 (ATTPPDNGNG…NTSLPTTGDT (72 aa)) is disordered. Gly residues predominate over residues 697–729 (GNGGTDNGNGNGNNGGTDGNGGTNNGNGSGTNG). Over residues 730–759 (GTTTTEDPTTTTSNTSTTGTSSNTSLPTTG) the composition is skewed to low complexity. The LPXTG sorting signal signature appears at 755–759 (LPTTG). A Pentaglycyl murein peptidoglycan amidated threonine modification is found at Thr-758. The propeptide at 759–784 (GDTAGLATVFGVILTTTALYVLRKRS) is removed by sortase A.

The protein resides in the secreted. It localises to the cell wall. This chain is Cell wall protein Lmo0130, found in Listeria monocytogenes serovar 1/2a (strain ATCC BAA-679 / EGD-e).